The primary structure comprises 72 residues: Translation initiation factor IF-1 (72 aa).

Residues 1–72 enclose the S1-like domain; the sequence is MSKDDVIEVE…TRGRIIYRHK (72 aa).

Belongs to the IF-1 family. Component of the 30S ribosomal translation pre-initiation complex which assembles on the 30S ribosome in the order IF-2 and IF-3, IF-1 and N-formylmethionyl-tRNA(fMet); mRNA recruitment can occur at any time during PIC assembly.

It is found in the cytoplasm. Its function is as follows. One of the essential components for the initiation of protein synthesis. Stabilizes the binding of IF-2 and IF-3 on the 30S subunit to which N-formylmethionyl-tRNA(fMet) subsequently binds. Helps modulate mRNA selection, yielding the 30S pre-initiation complex (PIC). Upon addition of the 50S ribosomal subunit IF-1, IF-2 and IF-3 are released leaving the mature 70S translation initiation complex. This chain is Translation initiation factor IF-1, found in Carboxydothermus hydrogenoformans (strain ATCC BAA-161 / DSM 6008 / Z-2901).